The chain runs to 223 residues: Thiamine-phosphate synthase (223 aa).

4-amino-2-methyl-5-(diphosphooxymethyl)pyrimidine contacts are provided by residues 45–49 (QYREK) and Asn-77. Residues Asp-78 and Asp-97 each coordinate Mg(2+). Thr-116 serves as a coordination point for 4-amino-2-methyl-5-(diphosphooxymethyl)pyrimidine. Residue 142-144 (SYT) participates in 2-[(2R,5Z)-2-carboxy-4-methylthiazol-5(2H)-ylidene]ethyl phosphate binding. Lys-145 provides a ligand contact to 4-amino-2-methyl-5-(diphosphooxymethyl)pyrimidine. 2-[(2R,5Z)-2-carboxy-4-methylthiazol-5(2H)-ylidene]ethyl phosphate-binding positions include Gly-173 and 193–194 (VT).

This sequence belongs to the thiamine-phosphate synthase family. Requires Mg(2+) as cofactor.

It carries out the reaction 2-[(2R,5Z)-2-carboxy-4-methylthiazol-5(2H)-ylidene]ethyl phosphate + 4-amino-2-methyl-5-(diphosphooxymethyl)pyrimidine + 2 H(+) = thiamine phosphate + CO2 + diphosphate. It catalyses the reaction 2-(2-carboxy-4-methylthiazol-5-yl)ethyl phosphate + 4-amino-2-methyl-5-(diphosphooxymethyl)pyrimidine + 2 H(+) = thiamine phosphate + CO2 + diphosphate. The enzyme catalyses 4-methyl-5-(2-phosphooxyethyl)-thiazole + 4-amino-2-methyl-5-(diphosphooxymethyl)pyrimidine + H(+) = thiamine phosphate + diphosphate. The protein operates within cofactor biosynthesis; thiamine diphosphate biosynthesis; thiamine phosphate from 4-amino-2-methyl-5-diphosphomethylpyrimidine and 4-methyl-5-(2-phosphoethyl)-thiazole: step 1/1. In terms of biological role, condenses 4-methyl-5-(beta-hydroxyethyl)thiazole monophosphate (THZ-P) and 2-methyl-4-amino-5-hydroxymethyl pyrimidine pyrophosphate (HMP-PP) to form thiamine monophosphate (TMP). This is Thiamine-phosphate synthase from Dictyoglomus thermophilum (strain ATCC 35947 / DSM 3960 / H-6-12).